We begin with the raw amino-acid sequence, 348 residues long: Rhodopsin (348 aa).

Met-1 carries the post-translational modification N-acetylmethionine. Residues 1–36 (MNGTEGLNFYVPFSNKTGVVRSPFEYPQYYLAEPWQ) are Extracellular-facing. N-linked (GlcNAc...) asparagine glycosylation is found at Asn-2 and Asn-15. A helical membrane pass occupies residues 37–61 (FSVLAAYMFLLIVLGFPINFLTLYV). Residues 62-73 (TVQHKKLRTPLN) lie on the Cytoplasmic side of the membrane. A helical membrane pass occupies residues 74 to 96 (YIPLNLAVANLFMVFGGFTTTLY). Over 97 to 110 (TSLHAYFVFGPTGC) the chain is Extracellular. Cys-110 and Cys-187 are oxidised to a cystine. A helical membrane pass occupies residues 111-133 (NLEGFFATLGGEIALWSLVVLAI). The 'Ionic lock' involved in activated form stabilization motif lies at 134–136 (ERY). The Cytoplasmic portion of the chain corresponds to 134 to 152 (ERYVVVCKPMSNFRFGENH). The helical transmembrane segment at 153 to 173 (AIMGLALTWVMAMACAAPPLV) threads the bilayer. Over 174 to 202 (GWSRYIPEGMQCSCGIDYYTSRQEVNNES) the chain is Extracellular. Zn(2+) is bound at residue Glu-201. The helical transmembrane segment at 203 to 224 (FVIYMFVVHFTIPLVIIFFCYG) threads the bilayer. Residues 225–252 (QLVFTVKEAAAQQQESATTQKAEKEVTR) lie on the Cytoplasmic side of the membrane. Residues 253–274 (MVIIMVVAFLICWVPYASVAFY) traverse the membrane as a helical segment. Residues 275-286 (IFTHQGSDFGPI) are Extracellular-facing. Gln-279 serves as a coordination point for Zn(2+). Residues 287–308 (FMTIPSFFAKSSSIYNPVIYIM) form a helical membrane-spanning segment. Lys-296 carries the N6-(retinylidene)lysine modification. At 309–348 (MNKQLRNCMLTTLCCGRNPLGDDEASTTASKTETSQVAPA) the chain is on the cytoplasmic side. S-palmitoyl cysteine attachment occurs at residues Cys-322 and Cys-323. Residues 330–348 (DDEASTTASKTETSQVAPA) are interaction with SAG. Ser-334 is subject to Phosphoserine. 2 positions are modified to phosphothreonine: Thr-335 and Thr-336. Residue Ser-338 is modified to Phosphoserine. 2 positions are modified to phosphothreonine: Thr-340 and Thr-342. The residue at position 343 (Ser-343) is a Phosphoserine.

Belongs to the G-protein coupled receptor 1 family. Opsin subfamily. As to quaternary structure, homodimer. May form a complex composed of RHO, GRK1 and RCVRN in a Ca(2+)-dependent manner; RCVRN prevents the interaction between GRK1 and RHO. Interacts with GRK1. Interacts (phosphorylated form) with SAG. Interacts with GNAT1. Interacts with GNAT3. SAG and G-proteins compete for a common binding site. Interacts with PRCD; the interaction promotes PRCD stability. Forms a complex with ASAP1 and ARF4. Forms a complex with ASAP1, RAB11A, Rabin8/RAB3IP, ARF4 and RAB11FIP3; the complex regulates Golgi-to-cilia rhodopsin/RHO transport in photoreceptors. Post-translationally, phosphorylated on some or all of the serine and threonine residues present in the C-terminal region. In terms of processing, contains one covalently linked retinal chromophore. Upon light absorption, the covalently bound 11-cis-retinal is converted to all-trans-retinal. After hydrolysis of the Schiff base and release of the covalently bound all-trans-retinal, active rhodopsin is regenerated by binding of a fresh molecule of 11-cis-retinal.

The protein resides in the membrane. It localises to the cell projection. Its subcellular location is the cilium. It is found in the photoreceptor outer segment. In terms of biological role, photoreceptor required for image-forming vision at low light intensity. Required for photoreceptor cell viability after birth. Light-induced isomerization of 11-cis to all-trans retinal triggers a conformational change that activates signaling via G-proteins. Subsequent receptor phosphorylation mediates displacement of the bound G-protein alpha subunit by the arrestin SAG and terminates signaling. This chain is Rhodopsin (RHO), found in Globicephala melas (Long-finned pilot whale).